Consider the following 29-residue polypeptide: Lambda-theraphotoxin-Ec2c (29 aa).

3 disulfide bridges follow: Cys2–Cys16, Cys9–Cys21, and Cys15–Cys25.

This sequence belongs to the neurotoxin 30 (phrixotoxin) family. Expressed by the venom gland.

The protein localises to the secreted. Functionally, both insecticidal and vertebrate neurotoxin that potently blocks insect calcium-activated potassium (BKCa) channels (Slo-type) in cockroach dorsal unpaired median (DUM) neurons (IC(50)=24.6 nM). This occurs in the absence of any shifts in the voltage dependence of activation. May interact with the turret and/or loop region of the external entrance to the channel and does not project deeply into the pore of the channel. Also shows toxicity to mice by introcerebroventicular injection. The sequence is that of Lambda-theraphotoxin-Ec2c from Eucratoscelus constrictus (African red-rump baboon spider).